We begin with the raw amino-acid sequence, 375 residues long: Ornithine carbamoyltransferase, chloroplastic (375 aa).

Residues 123-126 (SMRT), arginine 174, histidine 201, and glutamine 204 contribute to the carbamoyl phosphate site. Residues asparagine 232, aspartate 293, serine 297, and methionine 298 each contribute to the L-ornithine site. Cysteine 333 (proton acceptor) is an active-site residue. Carbamoyl phosphate is bound by residues 333 to 334 (CL) and arginine 361.

It belongs to the aspartate/ornithine carbamoyltransferase superfamily. OTCase family. In terms of assembly, homotrimer.

The protein localises to the plastid. It localises to the chloroplast. The enzyme catalyses carbamoyl phosphate + L-ornithine = L-citrulline + phosphate + H(+). The protein is Ornithine carbamoyltransferase, chloroplastic (ARGF) of Pisum sativum (Garden pea).